The following is a 513-amino-acid chain: V-type proton ATPase subunit B (513 aa).

Arginine 375 serves as a coordination point for ATP. Residues 484-503 are compositionally biased toward basic and acidic residues; sequence ADRKGKGKDKPTTKDTRDTA. Residues 484–513 form a disordered region; that stretch reads ADRKGKGKDKPTTKDTRDTAAPEEENLIDA. A compositionally biased stretch (acidic residues) spans 504–513; sequence APEEENLIDA.

It belongs to the ATPase alpha/beta chains family. In terms of assembly, V-ATPase is a heteromultimeric enzyme composed of a peripheral catalytic V1 complex (components A to H) attached to an integral membrane V0 proton pore complex (components: a, c, c', c'', d, e, f and VOA1).

The protein resides in the vacuole membrane. Its function is as follows. Non-catalytic subunit of the V1 complex of vacuolar(H+)-ATPase (V-ATPase), a multisubunit enzyme composed of a peripheral complex (V1) that hydrolyzes ATP and a membrane integral complex (V0) that translocates protons. V-ATPase is responsible for acidifying and maintaining the pH of intracellular compartments. The sequence is that of V-type proton ATPase subunit B from Neurospora crassa (strain ATCC 24698 / 74-OR23-1A / CBS 708.71 / DSM 1257 / FGSC 987).